A 629-amino-acid chain; its full sequence is (-)-alpha pinene synthase 1, chloroplastic (629 aa).

Residues 1 to 48 (MSPVSVISLPSDLCLPTSFIDRSGRELNPLHITIPNVAMRRQGKLMTR) constitute a chloroplast transit peptide. 3 residues coordinate Mg(2+): Asp-380, Asp-384, and Asp-532. The DDXXD motif signature appears at 380–384 (DDMYD).

It belongs to the terpene synthase family. Tpsd subfamily. Mg(2+) is required as a cofactor. It depends on Mn(2+) as a cofactor.

The protein localises to the plastid. Its subcellular location is the chloroplast. The enzyme catalyses (2E)-geranyl diphosphate = (1S,5S)-alpha-pinene + diphosphate. It catalyses the reaction (2E)-geranyl diphosphate = (1S,5S)-beta-pinene + diphosphate. It participates in terpene metabolism; oleoresin biosynthesis. It functions in the pathway secondary metabolite biosynthesis; terpenoid biosynthesis. Monoterpene synthase (TPS) involved in the biosynthesis of monoterpene natural products included in conifer oleoresin secretions and volatile emissions; these compounds contribute to biotic and abiotic stress defense against herbivores and pathogens. Catalyzes the conversion of (2E)-geranyl diphosphate (GPP) to (-)-alpha-pinene and, to a lower extent, to (-)-beta-pinene. The chain is (-)-alpha pinene synthase 1, chloroplastic from Pinus contorta (Shore pine).